The following is a 216-amino-acid chain: 3-isopropylmalate dehydratase small subunit (216 aa).

This sequence belongs to the LeuD family. LeuD type 1 subfamily. Heterodimer of LeuC and LeuD.

The enzyme catalyses (2R,3S)-3-isopropylmalate = (2S)-2-isopropylmalate. The protein operates within amino-acid biosynthesis; L-leucine biosynthesis; L-leucine from 3-methyl-2-oxobutanoate: step 2/4. Catalyzes the isomerization between 2-isopropylmalate and 3-isopropylmalate, via the formation of 2-isopropylmaleate. This is 3-isopropylmalate dehydratase small subunit from Cupriavidus pinatubonensis (strain JMP 134 / LMG 1197) (Cupriavidus necator (strain JMP 134)).